A 288-amino-acid chain; its full sequence is Signal recognition particle receptor FtsY (288 aa).

Residues 93–100 (GINGTGKT), 175–179 (DTAGR), and 233–236 (TKLD) contribute to the GTP site.

Belongs to the GTP-binding SRP family. FtsY subfamily. In terms of assembly, part of the signal recognition particle protein translocation system, which is composed of SRP and FtsY.

Its subcellular location is the cell membrane. The protein resides in the cytoplasm. The catalysed reaction is GTP + H2O = GDP + phosphate + H(+). Involved in targeting and insertion of nascent membrane proteins into the cytoplasmic membrane. Acts as a receptor for the complex formed by the signal recognition particle (SRP) and the ribosome-nascent chain (RNC). This Thermoplasma acidophilum (strain ATCC 25905 / DSM 1728 / JCM 9062 / NBRC 15155 / AMRC-C165) protein is Signal recognition particle receptor FtsY.